The chain runs to 526 residues: Lysine--tRNA ligase (526 aa).

Mg(2+) is bound by residues Glu431 and Glu438.

It belongs to the class-II aminoacyl-tRNA synthetase family. As to quaternary structure, homodimer. Mg(2+) is required as a cofactor.

It localises to the cytoplasm. The catalysed reaction is tRNA(Lys) + L-lysine + ATP = L-lysyl-tRNA(Lys) + AMP + diphosphate. This is Lysine--tRNA ligase (lysS) from Chlamydia trachomatis serovar D (strain ATCC VR-885 / DSM 19411 / UW-3/Cx).